The chain runs to 538 residues: Putative cysteine ligase BshC (538 aa).

Residues 421 to 485 (VEEKFQEAKK…LERRHEVELN (65 aa)) are a coiled coil.

The protein belongs to the BshC family.

In terms of biological role, involved in bacillithiol (BSH) biosynthesis. May catalyze the last step of the pathway, the addition of cysteine to glucosamine malate (GlcN-Mal) to generate BSH. This chain is Putative cysteine ligase BshC, found in Bacillus cytotoxicus (strain DSM 22905 / CIP 110041 / 391-98 / NVH 391-98).